A 440-amino-acid polypeptide reads, in one-letter code: Transposon Ty1-LR4 Gag polyprotein (440 aa).

3 stretches are compositionally biased toward polar residues: residues 1 to 10, 48 to 60, and 127 to 152; these read MESQQLSQHP, TKAN…TPAS, and QSQF…GNTF. 3 disordered regions span residues 1–93, 126–173, and 352–440; these read MESQ…MMTQ, PQSQ…RPPP, and GSRN…PGTY. Low complexity predominate over residues 153–165; it reads TDSSSADSDMTST. Residues 299-401 form an RNA-binding region; that stretch reads NNGIHINNKV…NSKSKTARAH (103 aa). A compositionally biased stretch (low complexity) spans 402–418; it reads NVSTSNNSPSTDNDSIS. S416 carries the phosphoserine modification. Over residues 419–428 the composition is skewed to polar residues; that stretch reads KSTTEPIQLN. Residues 429–440 are compositionally biased toward basic and acidic residues; sequence NKHDLHLRPGTY.

In terms of assembly, homotrimer.

It localises to the cytoplasm. In terms of biological role, capsid protein (CA) is the structural component of the virus-like particle (VLP), forming the shell that encapsulates the retrotransposons dimeric RNA genome. The particles are assembled from trimer-clustered units and there are holes in the capsid shells that allow for the diffusion of macromolecules. CA also has nucleocapsid-like chaperone activity, promoting primer tRNA(i)-Met annealing to the multipartite primer-binding site (PBS), dimerization of Ty1 RNA and initiation of reverse transcription. In Saccharomyces cerevisiae (strain ATCC 204508 / S288c) (Baker's yeast), this protein is Transposon Ty1-LR4 Gag polyprotein (TY1A-LR4).